The sequence spans 414 residues: Transposon Ty4-J Gag polyprotein (414 aa).

Positions 39–115 (RKVSIKDEQV…IQLLETNENN (77 aa)) form a coiled coil. The tract at residues 378 to 414 (GAQRQQPLKSSAKRTKVLEQDTKKVEQSVQQQKTGNY) is disordered. The segment covering 393–403 (KVLEQDTKKVE) has biased composition (basic and acidic residues). The span at 404 to 414 (QSVQQQKTGNY) shows a compositional bias: polar residues.

Capsid protein (CA) is the structural component of the virus-like particle (VLP), forming the shell that encapsulates the retrotransposons dimeric RNA genome. This chain is Transposon Ty4-J Gag polyprotein (TY4A-J), found in Saccharomyces cerevisiae (strain ATCC 204508 / S288c) (Baker's yeast).